We begin with the raw amino-acid sequence, 247 residues long: V-type proton ATPase subunit D (247 aa).

It belongs to the V-ATPase D subunit family. As to quaternary structure, V-ATPase is a heteromultimeric enzyme made up of two complexes: the ATP-hydrolytic V1 complex and the proton translocation V0 complex. The V1 complex consists of three catalytic AB heterodimers that form a heterohexamer, three peripheral stalks each consisting of EG heterodimers, one central rotor including subunits D and F, and the regulatory subunits C and H. The proton translocation complex V0 consists of the proton transport subunit a, a ring of proteolipid subunits c9c'', rotary subunit d, subunits e and f, and the accessory subunits ATP6AP1/Ac45 and ATP6AP2/PRR. Interacts with SNX10.

Its subcellular location is the membrane. The protein localises to the cytoplasmic vesicle. The protein resides in the clathrin-coated vesicle membrane. It localises to the cytoplasm. It is found in the cytoskeleton. Its subcellular location is the microtubule organizing center. The protein localises to the centrosome. The protein resides in the cell projection. It localises to the cilium. Its function is as follows. Subunit of the V1 complex of vacuolar(H+)-ATPase (V-ATPase), a multisubunit enzyme composed of a peripheral complex (V1) that hydrolyzes ATP and a membrane integral complex (V0) that translocates protons. V-ATPase is responsible for acidifying and maintaining the pH of intracellular compartments and in some cell types, is targeted to the plasma membrane, where it is responsible for acidifying the extracellular environment. May play a role in cilium biogenesis through regulation of the transport and the localization of proteins to the cilium. This chain is V-type proton ATPase subunit D (ATP6V1D), found in Homo sapiens (Human).